Consider the following 280-residue polypeptide: Tryptophan 2,3-dioxygenase (280 aa).

Residues 49-53, Tyr111, and Arg115 contribute to the substrate site; that span reads FIIIH. His238 contacts heme. Residue Thr252 participates in substrate binding.

The protein belongs to the tryptophan 2,3-dioxygenase family. In terms of assembly, homotetramer. The cofactor is heme.

The catalysed reaction is L-tryptophan + O2 = N-formyl-L-kynurenine. The protein operates within amino-acid degradation; L-tryptophan degradation via kynurenine pathway; L-kynurenine from L-tryptophan: step 1/2. Its function is as follows. Heme-dependent dioxygenase that catalyzes the oxidative cleavage of the L-tryptophan (L-Trp) pyrrole ring and converts L-tryptophan to N-formyl-L-kynurenine. Catalyzes the oxidative cleavage of the indole moiety. The protein is Tryptophan 2,3-dioxygenase of Geobacillus thermodenitrificans (strain NG80-2).